Reading from the N-terminus, the 324-residue chain is Olfactory receptor 51D1 (324 aa).

The Extracellular portion of the chain corresponds to 1-38; sequence MQKPQLLVPIIATSNGNLVHAAYFLLVGIPGLGPTIHF. The helical transmembrane segment at 39–59 threads the bilayer; the sequence is WLAFPLCFMYALATLGNLTIV. The Cytoplasmic segment spans residues 60–67; that stretch reads LIIRVERR. The helical transmembrane segment at 68–88 threads the bilayer; sequence LHEPMYLFLAMLSTIDLVLSS. Residues 89-112 lie on the Extracellular side of the membrane; it reads ITMPKMASLFLMGIQEIEFNICLA. Cys110 and Cys202 are oxidised to a cystine. Residues 113–133 form a helical membrane-spanning segment; sequence QMFLIHALSAVESAVLLAMAF. The Cytoplasmic portion of the chain corresponds to 134–152; sequence DRFVAICHPLRHASVLTGC. Residues 153-173 traverse the membrane as a helical segment; sequence TVAKIGLSALTRGFVFFFPLP. Topologically, residues 174-209 are extracellular; the sequence is FILKWLSYCQTHTVTHSFCLHQDIMKLSCTDTRVNV. A helical transmembrane segment spans residues 210–230; that stretch reads VYGLFIILSVMGVDSLFIGFS. At 231–250 the chain is on the cytoplasmic side; sequence YILILWAVLELSSRRAALKA. Residues 251-271 form a helical membrane-spanning segment; that stretch reads FNTCISHLCAVLVFYVPLIGL. Topologically, residues 272-285 are extracellular; that stretch reads SVVHRLGGPTSLLH. Residues 286-306 form a helical membrane-spanning segment; sequence VVMANTYLLLPPVVNPLVYGA. Topologically, residues 307–324 are cytoplasmic; that stretch reads KTKEICSRVLCMFSQGGK.

Belongs to the G-protein coupled receptor 1 family.

Its subcellular location is the cell membrane. Odorant receptor. This chain is Olfactory receptor 51D1 (OR51D1), found in Homo sapiens (Human).